Reading from the N-terminus, the 257-residue chain is Zinc import ATP-binding protein ZnuC (257 aa).

One can recognise an ABC transporter domain in the interval 6 to 221 (VRLEQITVAF…AFVETFGHQV (216 aa)). 38-45 (GPNGAGKT) is an ATP binding site.

It belongs to the ABC transporter superfamily. Zinc importer (TC 3.A.1.15.5) family. The complex is composed of two ATP-binding proteins (ZnuC), two transmembrane proteins (ZnuB) and a solute-binding protein (ZnuA).

The protein localises to the cell inner membrane. The catalysed reaction is Zn(2+)(out) + ATP(in) + H2O(in) = Zn(2+)(in) + ADP(in) + phosphate(in) + H(+)(in). In terms of biological role, part of the ABC transporter complex ZnuABC involved in zinc import. Responsible for energy coupling to the transport system. This is Zinc import ATP-binding protein ZnuC from Marinobacter nauticus (strain ATCC 700491 / DSM 11845 / VT8) (Marinobacter aquaeolei).